Reading from the N-terminus, the 546-residue chain is Hexose oxidase (546 aa).

The 183-residue stretch at 40 to 222 (IGTNIDFVYV…TKYYFKDLPM (183 aa)) folds into the FAD-binding PCMH-type domain. Positions 79-138 (HCYEDFVFDECVKAIINVTGLVESGYDDDRGYFVSSGDTNWGSFKTLFRDHGRVLPGGSC) form a cross-link, 6-(S-cysteinyl)-8alpha-(pros-histidyl)-FAD (His-Cys). N-linked (GlcNAc...) asparagine glycosylation is found at Asn-95 and Asn-358.

This sequence belongs to the oxygen-dependent FAD-linked oxidoreductase family. In terms of assembly, homodimer. Requires FAD as cofactor. Cleaved into 40 kDa and 29 kDa cleavage products, but the 2 polypeptide chains do not separate and seem to be physically linked together. Post-translationally, the FAD cofactor is bound via a bicovalent 6-S-cysteinyl, 8alpha-N1-histidyl FAD linkage.

It carries out the reaction beta-D-glucose + O2 = D-glucono-1,5-lactone + H2O2. The enzyme catalyses D-galactose + O2 = D-galactono-1,5-lactone + H2O2. The catalysed reaction is D-maltose + O2 = D-maltobiono-1,5-lactone + H2O2. It catalyses the reaction D-cellobiose + O2 = D-cellobiono-1,5-lactone + H2O2. It carries out the reaction beta-lactose + O2 = lactobiono-1,5-lactone + H2O2. In terms of biological role, catalyzes the selective oxidation of C1 hydroxyl moieties on mono- and disaccharides with concomitant reduction of molecular oxygen to hydrogen peroxide. This results in the formation of the corresponding lactones, which typically undergo spontaneous hydrolysis. Hexose oxidase is able to oxidize a variety of substrates including D-glucose, D-galactose, maltose, cellobiose, and lactose. The sequence is that of Hexose oxidase (HOX) from Chondrus crispus (Carrageen Irish moss).